The sequence spans 467 residues: Involucrin (467 aa).

Positions 48–467 (EIQEKGFPKH…ELENRTQQEK (420 aa)) are disordered. The span at 49–75 (IQEKGFPKHEEKRPNPVKDLPDQKCEH) shows a compositional bias: basic and acidic residues. Composition is skewed to low complexity over residues 76-95 (QQQPGPQKQQLQVKKSQQEL) and 105-177 (QQLP…VPQE). Basic and acidic residues-rich tracts occupy residues 178–192 (LHLRQHQEKLQDPEL) and 220–231 (RHQEPQEQELHL). Over residues 278–290 (QQQQESPEPELQL) the composition is skewed to low complexity. Basic and acidic residues-rich tracts occupy residues 295-318 (QSHEPDMAGDQKEKQKLHKPELYL), 348-373 (LEEKQHQKPPEPELHLGKQQESHEPD), 380-391 (EKQKLGEPELHL), 415-437 (KQEKASREQQLDYSHLEQEKELS), and 450-467 (KQLERKKHELENRTQQEK).

Belongs to the involucrin family. As to quaternary structure, directly or indirectly cross-linked to cornifelin (CNFN). Substrate of transglutaminase. Specific glutamines or lysines are cross-linked to keratins, desmoplakin and to inter involucrin molecules. As to expression, keratinocytes of epidermis and other stratified squamous epithelia.

Its subcellular location is the cytoplasm. Part of the insoluble cornified cell envelope (CE) of stratified squamous epithelia. The sequence is that of Involucrin (Ivl) from Mus musculus (Mouse).